Reading from the N-terminus, the 1366-residue chain is DNA-directed RNA polymerase subunit beta (1366 aa).

The protein belongs to the RNA polymerase beta chain family. The RNAP catalytic core consists of 2 alpha, 1 beta, 1 beta' and 1 omega subunit. When a sigma factor is associated with the core the holoenzyme is formed, which can initiate transcription.

It catalyses the reaction RNA(n) + a ribonucleoside 5'-triphosphate = RNA(n+1) + diphosphate. Functionally, DNA-dependent RNA polymerase catalyzes the transcription of DNA into RNA using the four ribonucleoside triphosphates as substrates. This is DNA-directed RNA polymerase subunit beta from Polynucleobacter necessarius subsp. necessarius (strain STIR1).